A 68-amino-acid polypeptide reads, in one-letter code: Large ribosomal subunit protein bL31 (68 aa).

Cys16, Cys18, Cys36, and Cys39 together coordinate Zn(2+).

It belongs to the bacterial ribosomal protein bL31 family. Type A subfamily. As to quaternary structure, part of the 50S ribosomal subunit. It depends on Zn(2+) as a cofactor.

Its function is as follows. Binds the 23S rRNA. The protein is Large ribosomal subunit protein bL31 of Sorangium cellulosum (strain So ce56) (Polyangium cellulosum (strain So ce56)).